Reading from the N-terminus, the 349-residue chain is Heat-inducible transcription repressor HrcA (349 aa).

Belongs to the HrcA family.

Negative regulator of class I heat shock genes (grpE-dnaK-dnaJ and groELS operons). Prevents heat-shock induction of these operons. The protein is Heat-inducible transcription repressor HrcA of Xylella fastidiosa (strain M23).